Consider the following 819-residue polypeptide: Lysine-specific demethylase JMJ18 (819 aa).

Residues 1–39 (MENPPLESEIKEDMSLKNHPPDKDKDKDTIMEQPSSPRH) are disordered. Basic and acidic residues predominate over residues 8 to 30 (SEIKEDMSLKNHPPDKDKDKDTI). Residues 59–100 (APVFTPSLEEFVDPLAYIEKIRPLAEPYGICRIIPPSTWKPP) enclose the JmjN domain. A disordered region spans residues 120–171 (TVDLLQNREPMKKKPKSRKRKRRRNSRMGSSKRRSGSSPAESTSSPEAEEKF). A Nuclear localization signal motif is present at residues 130–137 (MKKKPKSR). Over residues 130–154 (MKKKPKSRKRKRRRNSRMGSSKRRS) the composition is skewed to basic residues. The span at 155-165 (GSSPAESTSSP) shows a compositional bias: low complexity. Residues 261–427 (QYTLSGWNLN…HGQNAVELYS (167 aa)) form the JmjC domain. H307, E309, and H395 together coordinate Fe cation. Zn(2+)-binding residues include C519, C522, C533, C535, C542, H545, C550, and C552. The segment at 519 to 571 (CFSCFYDLHLSASGCKCSPEEYACLKHADDLCSCDVKDGFILLRYTMDELSSL) adopts a C5HC2 zinc-finger fold. The FYR N-terminal domain maps to 644–702 (ASENLGVSVEPINLGFLIFGKLWCNKYAIFPKGFRSRVKFYNVLDPTRMSNYISEVLDA). The FYR C-terminal domain occupies 704–788 (LMGPLFRVTL…HRLVEYWNHK (85 aa)).

Belongs to the JARID1 histone demethylase family. Requires Fe(2+) as cofactor. In terms of tissue distribution, expressed in vascular tissues of roots, cotyledons, leaves and flowers. Expressed predominantly in phloem companion cells of roots. Present in inflorescences, roots, siliques, leaves and stems.

It localises to the nucleus. It catalyses the reaction N(6),N(6),N(6)-trimethyl-L-lysyl(4)-[histone H3] + 2-oxoglutarate + O2 = N(6),N(6)-dimethyl-L-lysyl(4)-[histone H3] + formaldehyde + succinate + CO2. It carries out the reaction N(6),N(6)-dimethyl-L-lysyl(4)-[histone H3] + 2-oxoglutarate + O2 = N(6)-methyl-L-lysyl(4)-[histone H3] + formaldehyde + succinate + CO2. Histone demethylase that demethylates 'Lys-4' (H3K4me) of histone H3 with a specific activity for H3K4me3 and H3K4me2. No activity on H3K9me3/2, H3K27me3/2 and H3K36me3/2. Involved in the control of flowering time by demethylating H3K4me3 at the FLC locus and repressing its expression. The repression of FLC level and reduction in H3K4me3 at the FLC locus results in induction of the flowering activator FT, which is a downstream target of FLC. The sequence is that of Lysine-specific demethylase JMJ18 from Arabidopsis thaliana (Mouse-ear cress).